The chain runs to 591 residues: V-type ATP synthase alpha chain (591 aa).

Residue 233–240 (GPFGAGKT) coordinates ATP.

Belongs to the ATPase alpha/beta chains family.

The enzyme catalyses ATP + H2O + 4 H(+)(in) = ADP + phosphate + 5 H(+)(out). In terms of biological role, produces ATP from ADP in the presence of a proton gradient across the membrane. The V-type alpha chain is a catalytic subunit. In Streptococcus pyogenes serotype M49 (strain NZ131), this protein is V-type ATP synthase alpha chain.